The primary structure comprises 177 residues: Protein VERNALIZATION 3 (177 aa).

The protein belongs to the phosphatidylethanolamine-binding protein family. In terms of tissue distribution, expressed in leaves but not in shoot apex.

Involved in the regulation of vernalization and of flowering time; this process in essential for flowering in cv. Bd29-1 but seems do not occur in cv. Bd21. In Brachypodium distachyon (Purple false brome), this protein is Protein VERNALIZATION 3.